The sequence spans 252 residues: Small ribosomal subunit protein uS2 (252 aa).

A disordered region spans residues 231–252; that stretch reads SVESTAQEQVEETAQEETAVEA. Over residues 239 to 252 the composition is skewed to acidic residues; sequence QVEETAQEETAVEA.

Belongs to the universal ribosomal protein uS2 family.

This Acetivibrio thermocellus (strain ATCC 27405 / DSM 1237 / JCM 9322 / NBRC 103400 / NCIMB 10682 / NRRL B-4536 / VPI 7372) (Clostridium thermocellum) protein is Small ribosomal subunit protein uS2.